Reading from the N-terminus, the 819-residue chain is uncharacterized protein (819 aa).

Ser-16 bears the Phosphoserine mark. Disordered stretches follow at residues 28-83 (SNTQ…PPTV) and 96-134 (PTFT…ASKI). The zn(2)-C6 fungal-type DNA-binding region spans 36–63 (KIRFTENENDLSPERAQKEPVSIPHGRY). 2 stretches are compositionally biased toward polar residues: residues 64–77 (TWST…SHLP) and 96–118 (PTFT…NDYI).

The protein localises to the nucleus. This is an uncharacterized protein from Schizosaccharomyces pombe (strain 972 / ATCC 24843) (Fission yeast).